Reading from the N-terminus, the 699-residue chain is Chitinase A1 (699 aa).

The signal sequence occupies residues 1–41 (MINLNKHTAFKKTAKFFLGLSLLLSVIVPSFALQPATAEAA). Residues 44 to 454 (YKIVGYYPSW…NKLKADLPTG (411 aa)) form the GH18 domain. Chitin is bound by residues 135–136 (DQ) and 162–165 (GGWT). The active-site Proton donor is the glutamate 204. Chitin-binding positions include tyrosine 205, 277–280 (MTYD), and tryptophan 433. A disordered region spans residues 449-471 (ADLPTGGTVPPVDTTAPSVPGNA). Residues 452-465 (PTGGTVPPVDTTAP) show a composition bias toward low complexity. Fibronectin type-III domains follow at residues 467–553 (VPGN…TAQP) and 562–647 (APTN…TAAE).

The protein belongs to the glycosyl hydrolase 18 family. Chitinase class II subfamily.

The enzyme catalyses Random endo-hydrolysis of N-acetyl-beta-D-glucosaminide (1-&gt;4)-beta-linkages in chitin and chitodextrins.. The polypeptide is Chitinase A1 (chiA1) (Niallia circulans (Bacillus circulans)).